The following is a 555-amino-acid chain: GPI-anchor transamidase component PIGS (555 aa).

At Ala-2–Arg-18 the chain is on the cytoplasmic side. Arg-15 and Arg-18 together coordinate a cardiolipin. A helical membrane pass occupies residues Ala-19–Thr-39. Residues Glu-40–Gln-517 are Lumenal-facing. N-linked (GlcNAc...) asparagine glycosylation is found at Asn-267 and Asn-370. A helical transmembrane segment spans residues Lys-518 to Pro-532. The Cytoplasmic portion of the chain corresponds to Ile-533–Asp-555.

It belongs to the PIGS family. As to quaternary structure, heteropentamer. Part of the GPI-anchor transamidase complex, consisting of PIGK, PIGT, PIGS, PIGU and GAA1.

The protein localises to the endoplasmic reticulum membrane. It participates in glycolipid biosynthesis; glycosylphosphatidylinositol-anchor biosynthesis. Functionally, component of the glycosylphosphatidylinositol-anchor (GPI-anchor) transamidase (GPI-T) complex that catalyzes the formation of the linkage between a proprotein and a GPI-anchor and participates in GPI anchored protein biosynthesis. The polypeptide is GPI-anchor transamidase component PIGS (Rattus norvegicus (Rat)).